A 73-amino-acid polypeptide reads, in one-letter code: Tetrahydromethanopterin S-methyltransferase subunit G (73 aa).

Residues I48–S68 traverse the membrane as a helical segment.

This sequence belongs to the MtrG family. The complex is composed of 8 subunits; MtrA, MtrB, MtrC, MtrD, MtrE, MtrF, MtrG and MtrH.

Its subcellular location is the cell membrane. The enzyme catalyses 5-methyl-5,6,7,8-tetrahydromethanopterin + coenzyme M + 2 Na(+)(in) = 5,6,7,8-tetrahydromethanopterin + methyl-coenzyme M + 2 Na(+)(out). It participates in one-carbon metabolism; methanogenesis from CO(2); methyl-coenzyme M from 5,10-methylene-5,6,7,8-tetrahydromethanopterin: step 2/2. Functionally, part of a complex that catalyzes the formation of methyl-coenzyme M and tetrahydromethanopterin from coenzyme M and methyl-tetrahydromethanopterin. This is an energy-conserving, sodium-ion translocating step. The polypeptide is Tetrahydromethanopterin S-methyltransferase subunit G (Methanosarcina acetivorans (strain ATCC 35395 / DSM 2834 / JCM 12185 / C2A)).